Reading from the N-terminus, the 235-residue chain is Small ribosomal subunit protein uS3 (235 aa).

Residues 39–107 (VRQFLNKELA…PAQINIAEVK (69 aa)) form the KH type-2 domain. The disordered stretch occupies residues 216-235 (QPEQQPTDKPKKVPRGKGRK).

Belongs to the universal ribosomal protein uS3 family. Part of the 30S ribosomal subunit. Forms a tight complex with proteins S10 and S14.

In terms of biological role, binds the lower part of the 30S subunit head. Binds mRNA in the 70S ribosome, positioning it for translation. This chain is Small ribosomal subunit protein uS3, found in Aggregatibacter actinomycetemcomitans (Actinobacillus actinomycetemcomitans).